The primary structure comprises 415 residues: uncharacterized protein (415 aa).

Disordered stretches follow at residues F39–H77, A220–T247, and V346–K415. Composition is skewed to basic and acidic residues over residues A220–N238, D365–M380, and S400–K415.

This is an uncharacterized protein from Rattus norvegicus (Rat).